Reading from the N-terminus, the 553-residue chain is Phosphoglucomutase (553 aa).

The segment at Met-1–Arg-24 is disordered. The segment covering Thr-11–Thr-20 has biased composition (polar residues). Residues Thr-20, Arg-24, Ser-117 to His-118, and Lys-131 contribute to the substrate site. Ser-117 (phosphoserine intermediate) is an active-site residue. A Mg(2+)-binding site is contributed by Ser-117. Positions 289, 291, and 293 each coordinate Mg(2+). Substrate is bound by residues Asp-293 to Arg-294, Thr-352, Glu-371 to Ser-373, Lys-384, and Arg-509.

Belongs to the phosphohexose mutase family. Mg(2+) serves as cofactor.

The protein localises to the cytoplasm. The enzyme catalyses alpha-D-glucose 1-phosphate = alpha-D-glucose 6-phosphate. This enzyme participates in both the breakdown and synthesis of glucose. The polypeptide is Phosphoglucomutase (pgm) (Entamoeba dispar).